The chain runs to 400 residues: ASTRA-associated protein 1 (400 aa).

WD repeat units lie at residues 6 to 54, 57 to 94, 240 to 272, and 273 to 312; these read SAPQ…PKLQ, AHKD…FEMP, EYQN…KVVI, and HSDP…KGEI.

This sequence belongs to the WD repeat ASA1 family. Component of the ASTRA chromatin remodeling machinery complex.

It is found in the nucleus. In terms of biological role, component of the ASTRA complex involved in chromatin remodeling. The polypeptide is ASTRA-associated protein 1 (ASA1) (Lodderomyces elongisporus (strain ATCC 11503 / CBS 2605 / JCM 1781 / NBRC 1676 / NRRL YB-4239) (Yeast)).